A 526-amino-acid polypeptide reads, in one-letter code: Adenylyl cyclase-associated protein (526 aa).

An adenyl cyclase-binding region spans residues 1–168 (MPDSKYTMQG…RQSKYFAYLS (168 aa)). Disordered stretches follow at residues 43–72 (EASK…PEVE), 255–304 (QSTK…DANK), and 326–371 (KVDK…RPPR). Positions 45 to 64 (SKNNKPSDSGADANTTNEPS) are enriched in polar residues. Positions 169 to 369 (ALSEGAPLFS…KPSTLKTKRP (201 aa)) match the SH3-binding motif. The span at 262–274 (ATSSPSPASATAA) shows a compositional bias: low complexity. A compositionally biased stretch (pro residues) spans 275-285 (PAPPPPPPAPP). Residues 290-302 (EISNDTPATSSDA) are compositionally biased toward polar residues. The segment covering 326-338 (KVDKSQQTHKNPE) has biased composition (basic and acidic residues). A compositionally biased stretch (low complexity) spans 342–352 (SSTVSSTGSKS). The interaction with SH3 domain of ABP1 stretch occupies residues 354-361 (PPPRPKKP). The span at 357 to 370 (RPKKPSTLKTKRPP) shows a compositional bias: basic residues. In terms of domain architecture, C-CAP/cofactor C-like spans 369–504 (PPRKELVGNK…EDDDYVEFPI (136 aa)). Positions 370–526 (PRKELVGNKW…FKSAVFEHAG (157 aa)) are dimerization and actin-binding. Ser-454 carries the post-translational modification Phosphoserine.

Belongs to the CAP family. As to quaternary structure, homodimer.

It localises to the cytoplasm. Its subcellular location is the cytoskeleton. The protein resides in the actin patch. The N-terminal domain binds to adenylyl cyclase, thereby enabling adenylyl cyclase to be activated by upstream regulatory signals, such as Ras. The C-terminal domain is required for normal cellular morphology and growth control. In Saccharomyces cerevisiae (strain ATCC 204508 / S288c) (Baker's yeast), this protein is Adenylyl cyclase-associated protein (SRV2).